Consider the following 181-residue polypeptide: Neuroblastoma suppressor of tumorigenicity 1 (181 aa).

Positions 1–16 are cleaved as a signal peptide; it reads MMLRVLVGAVLPAMLL. Intrachain disulfides connect Cys35–Cys85, Cys49–Cys99, Cys59–Cys118, Cys63–Cys120, and Cys82–Cys123. Positions 35–124 constitute a CTCK domain; sequence CEAKNITQIV…ILHCSCQACG (90 aa). Residues 132–181 form a disordered region; that stretch reads LSVYVQGEDGPGSQPGTHPHPHPHPHPGGQTPEPEDPPGAPHTEEEGAED.

It belongs to the DAN family. In terms of assembly, homodimer. As to expression, most abundant in normal lung and meningioma.

It is found in the secreted. In terms of biological role, possible candidate as a tumor suppressor gene of neuroblastoma. May play an important role in preventing cells from entering the final stage (G1/S) of the transformation process. The polypeptide is Neuroblastoma suppressor of tumorigenicity 1 (NBL1) (Homo sapiens (Human)).